Consider the following 327-residue polypeptide: Zinc transport protein ZntB (327 aa).

The Cytoplasmic portion of the chain corresponds to 1–271; sequence METIYGSSLK…AMNRRTYTMS (271 aa). Residues 272-292 form a helical membrane-spanning segment; that stretch reads LLAMIFLPTTFLTGLFGVNLG. Topologically, residues 293–300 are periplasmic; sequence GIPGNEYY. Residues 301–321 form a helical membrane-spanning segment; the sequence is LGFAIFCLLLFGLVLFVAWWL. Topologically, residues 322-327 are cytoplasmic; that stretch reads KKSKWL.

The protein belongs to the CorA metal ion transporter (MIT) (TC 1.A.35) family.

It is found in the cell inner membrane. The enzyme catalyses Zn(2+)(out) + H(+)(out) = Zn(2+)(in) + H(+)(in). Its function is as follows. Zinc transporter. Acts as a Zn(2+):proton symporter, which likely mediates zinc ion uptake. The chain is Zinc transport protein ZntB from Photorhabdus laumondii subsp. laumondii (strain DSM 15139 / CIP 105565 / TT01) (Photorhabdus luminescens subsp. laumondii).